We begin with the raw amino-acid sequence, 327 residues long: Eukaryotic translation initiation factor 3 subunit I (327 aa).

WD repeat units follow at residues 8–49, 51–89, 188–227, 229–268, and 285–324; these read GHER…GSYD, HNGAVWDIDVSWDTSKCVTASGDLTVKIWDAELGSCIYT, VHRYSIQDLQLSPRGDFLISASRDKTAALLDVNDLKKLKQ, KSERPVNSACIAPNRDHICLGGGEDAMQVTQTAVSAGHFE, and GHFGPINTMAWHPSGSIIATGGEDGYVRIQEFDEDYLGFT.

It belongs to the eIF-3 subunit I family. In terms of assembly, component of the eukaryotic translation initiation factor 3 (eIF-3) complex.

Its subcellular location is the cytoplasm. Component of the eukaryotic translation initiation factor 3 (eIF-3) complex, which is involved in protein synthesis of a specialized repertoire of mRNAs and, together with other initiation factors, stimulates binding of mRNA and methionyl-tRNAi to the 40S ribosome. The eIF-3 complex specifically targets and initiates translation of a subset of mRNAs involved in cell proliferation. This Caenorhabditis briggsae protein is Eukaryotic translation initiation factor 3 subunit I.